Reading from the N-terminus, the 103-residue chain is NADH-quinone oxidoreductase subunit K 1 (103 aa).

3 helical membrane-spanning segments follow: residues 6 to 26 (LGHF…GIFL), 32 to 52 (IIIL…LVAF), and 67 to 87 (LVLT…VVFF).

The protein belongs to the complex I subunit 4L family. In terms of assembly, NDH-1 is composed of 14 different subunits. Subunits NuoA, H, J, K, L, M, N constitute the membrane sector of the complex.

Its subcellular location is the cell inner membrane. It carries out the reaction a quinone + NADH + 5 H(+)(in) = a quinol + NAD(+) + 4 H(+)(out). Functionally, NDH-1 shuttles electrons from NADH, via FMN and iron-sulfur (Fe-S) centers, to quinones in the respiratory chain. The immediate electron acceptor for the enzyme in this species is believed to be ubiquinone. Couples the redox reaction to proton translocation (for every two electrons transferred, four hydrogen ions are translocated across the cytoplasmic membrane), and thus conserves the redox energy in a proton gradient. The chain is NADH-quinone oxidoreductase subunit K 1 from Rhodopseudomonas palustris (strain ATCC BAA-98 / CGA009).